Consider the following 413-residue polypeptide: Putative competence-damage inducible protein (413 aa).

Belongs to the CinA family.

This is Putative competence-damage inducible protein from Lacticaseibacillus casei (strain BL23) (Lactobacillus casei).